Consider the following 2333-residue polypeptide: Genome polyprotein (2333 aa).

In terms of domain architecture, Peptidase C28 spans 1–201 (MNTTDCFIAL…WKTKVQQKLK (201 aa)). The Cytoplasmic portion of the chain corresponds to 1–1481 (MNTTDCFIAL…SFVKRAFKRL (1481 aa)). Active-site for leader protease activity residues include Cys-51, His-148, and Asp-163. 2 disordered regions span residues 197–218 (QQKL…QSGN) and 238–265 (QLGD…NTQN). Residue Gly-202 is the site of N-myristoyl glycine; by host attachment. Polar residues-rich tracts occupy residues 204 to 218 (GQSS…QSGN) and 238 to 251 (QLGD…SNEG). Positions 252 to 265 (STDTTSTHTTNTQN) are enriched in low complexity. The tract at residues 789 to 797 (ALLRAATYY) is antigenic epitope. A Cell attachment site motif is present at residues 869 to 871 (RGD). Positions 1190–1354 (NVHIANLCKV…DGYKINNKLD (165 aa)) constitute an SF3 helicase domain. An ATP-binding site is contributed by 1218–1225 (GKSGQGKS). An intramembrane segment occupies 1482-1502 (KENFEIVALCLTLLANIVIMI). Residues 1503–2333 (RETRKRQKMV…RWVNAVCGDA (831 aa)) lie on the Cytoplasmic side of the membrane. Composition is skewed to basic and acidic residues over residues 1530–1539 (KTLDEAEKNP) and 1550–1564 (FRER…RNDE). Residues 1530-1585 (KTLDEAEKNPLETSGASTVGFRERPLPGQKARNDENSEPAQPAEEQPQAEGPYAGP) are disordered. The span at 1567–1579 (EPAQPAEEQPQAE) shows a compositional bias: low complexity. An O-(5'-phospho-RNA)-tyrosine mark is found at Tyr-1582, Tyr-1605, and Tyr-1629. In terms of domain architecture, Peptidase C3 spans 1653-1849 (APPTDLQKLV…YCSCVSRSML (197 aa)). The active-site For protease 3C activity; Proton donor/acceptor is His-1696. Catalysis depends on for protease 3C activity residues Asp-1734 and Cys-1813. The Nuclear localization signal motif lies at 1879 to 1887 (MRKTKLAPT). The 119-residue stretch at 2097–2215 (RNVWDVDYSA…ASDYDLDFEA (119 aa)) folds into the RdRp catalytic domain. Residue Asp-2201 is the For RdRp activity of the active site.

Belongs to the picornaviruses polyprotein family. In terms of assembly, interacts with host ISG15. Interacts (via R-G-D motif) with host ITGAV/ITGB6. Interacts with host MAVS; this interaction inhibits binding of host TRAF3 to MAVS, thereby suppressing interferon-mediated responses. As to quaternary structure, forms homooligomers. In terms of assembly, homohexamer. Interacts with host VIM. Interacts with host BECN1. Interacts with host DCTN3. As to quaternary structure, interacts with RNA-dependent RNA polymerase; this interaction allows 3B-1 to binds 2 polymerases and act as a primer. It also allows the recruitment of the RNA-dependent RNA polymerase to host membranes. In terms of assembly, interacts with RNA-dependent RNA polymerase; this interaction allows 3B-2 to act as a primer. Interacts with RNA-dependent RNA polymerase; this interaction allows 3B-3 to act as a primer. As to quaternary structure, interacts with 3B-1; this interaction allows 3B-1 to binds 2 polymerases and act as a primer. It also allows the recruitment of the RNA-dependent RNA polymerase to host membranes. Interacts with 3B-2; this interaction allows 3B-2 to act as a primer. Interacts with 3B-3; this interaction allows 3B-3 to act as a primer. Post-translationally, removes six residues from its own C-terminus, generating sLb(pro). Specific enzymatic cleavages in vivo by the viral proteases yield a variety of precursors and mature proteins. The polyprotein seems to be cotranslationally cleaved at the 2A/2B junction by a ribosomal skip from one codon to the next without formation of a peptide bond. This process would release the L-P1-2A peptide from the translational complex. In terms of processing, during virion maturation, immature virions are rendered infectious following cleavage of VP0 into VP4 and VP2. This maturation seems to be an autocatalytic event triggered by the presence of RNA in the capsid and is followed by a conformational change of the particle. Post-translationally, myristoylation is required during RNA encapsidation and formation of the mature virus particle. Uridylylated by the polymerase and covalently linked to the 5'-end of genomic RNA. These uridylylated forms act as a nucleotide-peptide primer for the polymerase.

It is found in the host nucleus. Its subcellular location is the host cytoplasm. It localises to the virion. The protein localises to the host endoplasmic reticulum membrane. The protein resides in the host cytoplasmic vesicle membrane. The enzyme catalyses Autocatalytically cleaves itself from the polyprotein of the foot-and-mouth disease virus by hydrolysis of a Lys-|-Gly bond, but then cleaves host cell initiation factor eIF-4G at bonds -Gly-|-Arg- and -Lys-|-Arg-.. The catalysed reaction is a ribonucleoside 5'-triphosphate + H2O = a ribonucleoside 5'-diphosphate + phosphate + H(+). It catalyses the reaction RNA(n) + a ribonucleoside 5'-triphosphate = RNA(n+1) + diphosphate. It carries out the reaction Selective cleavage of Gln-|-Gly bond in the poliovirus polyprotein. In other picornavirus reactions Glu may be substituted for Gln, and Ser or Thr for Gly.. Its function is as follows. Autocatalytically cleaves itself from the polyprotein at the L/VP0 junction. Also cleaves the host translation initiation factors EIF4G1 and EIF4G3, in order to shut off the capped cellular mRNA transcription. Plays a role in counteracting host innate antiviral response using diverse mechanisms. Possesses a deubiquitinase activity acting on both 'Lys-48' and 'Lys-63'-linked polyubiquitin chains. In turn, inhibits the ubiquitination and subsequent activation of key signaling molecules of type I IFN response such as host RIGI, TBK1, TRAF3 and TRAF6. Inhibits host NF-kappa-B activity by inducing a decrease in RELA mRNA levels. Cleaves a peptide bond in the C-terminus of host ISG15, resulting in the damaging of this modifier that can no longer be attached to target proteins. Also cleaves host G3BP1 and G3BP2 in order to inhibit cytoplasmic stress granules assembly. Lies on the inner surface of the capsid shell. After binding to the host receptor, the capsid undergoes conformational changes. Capsid protein VP4 is released, capsid protein VP1 N-terminus is externalized, and together, they shape a pore in the host membrane through which the viral genome is translocated into the host cell cytoplasm. After genome has been released, the channel shrinks. In terms of biological role, forms an icosahedral capsid of pseudo T=3 symmetry with capsid proteins VP1 and VP3. The capsid is composed of 60 copies of each capsid protein organized in the form of twelve pentamers and encloses the viral positive strand RNA genome. Upon acidifcation in the endosome, dissociates into pentamers. Functionally, forms an icosahedral capsid of pseudo T=3 symmetry with capsid proteins VP0 and VP3. The capsid is composed of 60 copies of each capsid protein organized in the form of twelve pentamers and encloses the viral positive strand RNA genome. Upon acidifcation in the endosome, dissociates into pentamers. Its function is as follows. Forms an icosahedral capsid of pseudo T=3 symmetry with capsid proteins VP2 and VP3. The capsid is composed of 60 copies of each capsid protein organized in the form of twelve pentamers and encloses the viral positive strand RNA genome. Mediates cell entry by attachment to an integrin receptor, usually host ITGAV/ITGB6. In addition, targets host MAVS to suppress type I IFN pathway. Upon acidifcation in the endosome, dissociates into pentamers. Mediates self-processing of the polyprotein by a translational effect termed 'ribosome skipping'. Mechanistically, 2A-mediated cleavage occurs between the C-terminal glycine and the proline of the downstream protein 2B. In the case of foot-and-mouth disease virus, the 2A oligopeptide is post-translationally 'trimmed' from the C-terminus of the upstream protein 1D by 3C proteinase. In terms of biological role, plays an essential role in the virus replication cycle by acting as a viroporin. Creates a pore in the host endoplasmic reticulum and as a consequence releases Ca2+ in the cytoplasm of infected cell. In turn, high levels of cytoplasmic calcium may trigger membrane trafficking and transport of viral ER-associated proteins to viroplasms, sites of viral genome replication. Functionally, associates with and induces structural rearrangements of intracellular membranes. Triggers host autophagy by interacting with host BECN1 and thereby promotes viral replication. Participates in viral replication and interacts with host DHX9. Displays RNA-binding, nucleotide binding and NTPase activities. May play a role in virion morphogenesis and viral RNA encapsidation by interacting with the capsid protein VP3. Its function is as follows. Plays important roles in virus replication, virulence and host range. Cooperates with host DDX56 to inhibit IRF3 nuclear translocation and subsequent type I interferon production. Covalently linked to the 5'-end of both the positive-strand and negative-strand genomic RNAs. Acts as a genome-linked replication primer. In terms of biological role, cysteine protease that generates mature viral proteins from the precursor polyprotein. In addition to its proteolytic activity, binds to viral RNA and thus influences viral genome replication. RNA and substrate bind cooperatively to the protease. Functionally, RNA-directed RNA polymerase 3D-POL replicates genomic and antigenomic RNA by recognizing replications specific signals. Covalently attaches UMP to a tyrosine of VPg, which is used to prime RNA synthesis. The positive stranded RNA genome is first replicated at virus induced membranous vesicles, creating a dsRNA genomic replication form. This dsRNA is then used as template to synthesize positive stranded RNA genomes. ss(+)RNA genomes are either translated, replicated or encapsidated. This chain is Genome polyprotein, found in Bos taurus (Bovine).